Here is a 521-residue protein sequence, read N- to C-terminus: MQSLSRRKRDSVPNLYAKCQLSGNCLPDVKNKVEADTLADRLLRWLGSVIYLGGLGIGTGRGSGGSTGYNPIGAPSRVTPSGTLVRPTVPVESLGPSEIIPIDAIDPTTSSVVPLEDLTIPDVTVDSGDTRGIGETTLQPAQVDISTSHDPISDVTGASSHPTIISGEDNAIAVLDVSPIEPPTKRIALATRGASATPHVSVISGTTEFGQSSDLNVFVNATFSGDSIGYTEEIPLEPLNPFQEFEIESPPKTSTPRDVLNRAIGRARDLYNRRVQQIPTRNPALLTQPSRAIVFGFENPAFDADITQTFERDLEQVAAAPDADFADIVTIGRPRFSETDAGQIRVSRLGRRGTIKTRSGVQIGQAVHFYYDLSTIDTADAIELSTLGQHSGEQSIVDAMIESSLIDPFEMPDPTFTEEQQLLDPLTEDFSQSHLVLTSSRRGTSFTIPTIPPGLGLRIYVDDVGSDLFVSYPESRVIPAGGLPTEPFVPLEPALLSDIFSTDFVYRPSLYRKKRKRLEMF.

The Nuclear localization signal signature appears at 1–10; that stretch reads MQSLSRRKRD. The cysteines at positions 19 and 25 are disulfide-linked. The Nuclear localization signal signature appears at 512–518; it reads RKKRKRL.

Belongs to the papillomaviridae L2 protein family. As to quaternary structure, interacts with major capsid protein L1. Interacts with E2; this interaction inhibits E2 transcriptional activity but not the DNA replication function E2. Interacts with host GADD45GIP1. Interacts with host HSPA8; this interaction is required for L2 nuclear translocation. Interacts with host importins KPNB2 and KPNB3. Forms a complex with importin alpha2-beta1 heterodimers via interaction with the importin alpha2 adapter. Interacts with host DYNLT1; this interaction is essential for virus intracellular transport during entry. Interacts (via C-terminus) with host retromer subunits VPS35 and VPS29. Post-translationally, highly phosphorylated.

Its subcellular location is the virion. It is found in the host nucleus. The protein localises to the host early endosome. It localises to the host Golgi apparatus. Minor protein of the capsid that localizes along the inner surface of the virion, within the central cavities beneath the L1 pentamers. Plays a role in capsid stabilization through interaction with the major capsid protein L1. Once the virion enters the host cell, L2 escorts the genomic DNA into the nucleus by promoting escape from the endosomal compartments and traffic through the host Golgi network. Mechanistically, the C-terminus of L2 possesses a cell-penetrating peptide that protudes from the host endosome, interacts with host cytoplasmic retromer cargo and thereby mediates the capsid delivery to the host trans-Golgi network. Plays a role through its interaction with host dynein in the intracellular microtubule-dependent transport of viral capsid toward the nucleus. Mediates the viral genome import into the nucleus through binding to host importins. Once within the nucleus, L2 localizes viral genomes to host PML bodies in order to activate early gene expression for establishment of infection. Later on, promotes late gene expression by interacting with the viral E2 protein and by inhibiting its transcriptional activation functions. During virion assembly, encapsidates the genome by direct interaction with the viral DNA. The protein is Minor capsid protein L2 of Human papillomavirus 4.